We begin with the raw amino-acid sequence, 226 residues long: Protein B (226 aa).

The igG constant region-binding stretch occupies residues 37–100 (DNVQGTDYEK…FSTQHLANKV (64 aa)). 3 repeats span residues 158 to 168 (TKSKLDKEIWN), 169 to 179 (TRFTRDKKVLN), and 180 to 190 (VKEFKVYNTLN).

Its subcellular location is the secreted. Protein B belongs to the group of bacterial Fc-binding protein. This chain is Protein B, found in Streptococcus agalactiae.